A 92-amino-acid chain; its full sequence is Acylphosphatase (92 aa).

The 88-residue stretch at alanine 5 to tyrosine 92 folds into the Acylphosphatase-like domain. Active-site residues include arginine 20 and asparagine 38.

The protein belongs to the acylphosphatase family.

The catalysed reaction is an acyl phosphate + H2O = a carboxylate + phosphate + H(+). The chain is Acylphosphatase (acyP) from Pectobacterium atrosepticum (strain SCRI 1043 / ATCC BAA-672) (Erwinia carotovora subsp. atroseptica).